The following is a 270-amino-acid chain: Homeobox protein vent1B (270 aa).

2 stretches are compositionally biased toward basic and acidic residues: residues 17 to 26 (EEAADGKDSM) and 44 to 59 (YAKE…DVQE). Disordered stretches follow at residues 17–66 (EEAA…SFQC) and 88–134 (TWGS…LRTA). Positions 89-99 (WGSSDEFSSAG) are enriched in polar residues. Basic and acidic residues predominate over residues 116-131 (QDTDHNGKSTKSDRRL). Positions 128–187 (DRRLRTAFSPQQISKLEQAFNKQRYLGASERKKLATSLMLSEIQVKTWFQNRRMKLKRQI) form a DNA-binding region, homeobox.

In terms of tissue distribution, expressed in the ventral marginal zone of gastrulae. At the end of gastrulation, predominantly localized to the ventral region of the closing slit blastopore. At early tail bud stage, expression is maintained only in the forming proctodeum.

It is found in the nucleus. Probable transcription regulator. Acts in a ventral signaling pathway downstream of bmp4 and vent2B. The protein is Homeobox protein vent1B (vent1B) of Xenopus laevis (African clawed frog).